The chain runs to 418 residues: Metacaspase-2 (418 aa).

A disordered region spans residues 68–113 (PSPYTHAPHAPSPFNHAPPDSYPFTHAPPASSPFNHAPPGPPPPVH). The span at 70–80 (PYTHAPHAPSP) shows a compositional bias: low complexity. Positions 103 to 112 (HAPPGPPPPV) are enriched in pro residues. Catalysis depends on residues His-200 and Cys-256. Residues 385-406 (PDEEEEVNQAPQKTQEPQLSAN) are disordered. The segment covering 393–405 (QAPQKTQEPQLSA) has biased composition (polar residues).

Belongs to the peptidase C14B family.

Its function is as follows. Acts as a negative regulator of oxidative stress cell death and hypersensitive cell death response mediated by immune response. Acts via indirect or direct regulation of AMC1 at postranscriptional level. The sequence is that of Metacaspase-2 (AMC2) from Arabidopsis thaliana (Mouse-ear cress).